A 364-amino-acid chain; its full sequence is Dual-specificity RNA methyltransferase RlmN (364 aa).

Glu91 serves as the catalytic Proton acceptor. One can recognise a Radical SAM core domain in the interval 102–337; it reads GTLRITQCLS…AIIRKSKGQD (236 aa). The cysteines at positions 109 and 342 are disulfide-linked. [4Fe-4S] cluster-binding residues include Cys116, Cys120, and Cys123. S-adenosyl-L-methionine is bound by residues 169–170, Ser201, 223–225, and Asn299; these read GE and SLH. Cys342 serves as the catalytic S-methylcysteine intermediate.

It belongs to the radical SAM superfamily. RlmN family. [4Fe-4S] cluster is required as a cofactor.

Its subcellular location is the cytoplasm. The enzyme catalyses adenosine(2503) in 23S rRNA + 2 reduced [2Fe-2S]-[ferredoxin] + 2 S-adenosyl-L-methionine = 2-methyladenosine(2503) in 23S rRNA + 5'-deoxyadenosine + L-methionine + 2 oxidized [2Fe-2S]-[ferredoxin] + S-adenosyl-L-homocysteine. It catalyses the reaction adenosine(37) in tRNA + 2 reduced [2Fe-2S]-[ferredoxin] + 2 S-adenosyl-L-methionine = 2-methyladenosine(37) in tRNA + 5'-deoxyadenosine + L-methionine + 2 oxidized [2Fe-2S]-[ferredoxin] + S-adenosyl-L-homocysteine. Functionally, specifically methylates position 2 of adenine 2503 in 23S rRNA and position 2 of adenine 37 in tRNAs. m2A2503 modification seems to play a crucial role in the proofreading step occurring at the peptidyl transferase center and thus would serve to optimize ribosomal fidelity. This is Dual-specificity RNA methyltransferase RlmN from Nitratidesulfovibrio vulgaris (strain DP4) (Desulfovibrio vulgaris).